A 121-amino-acid polypeptide reads, in one-letter code: uncharacterized protein (121 aa).

Residues 7-121 (IFCKIVRGEV…GGREMSWPPG (115 aa)) enclose the HIT domain. The short motif at 105–109 (HLHLH) is the Histidine triad motif element.

This is an uncharacterized protein from Aquifex aeolicus (strain VF5).